Here is a 68-residue protein sequence, read N- to C-terminus: DNA gyrase inhibitor YacG (68 aa).

The Zn(2+) site is built by C12, C15, C30, and C34. Residues 48–68 (KLKTQDAPTSGKGQHSDDYED) are disordered.

This sequence belongs to the DNA gyrase inhibitor YacG family. As to quaternary structure, interacts with GyrB. The cofactor is Zn(2+).

Inhibits all the catalytic activities of DNA gyrase by preventing its interaction with DNA. Acts by binding directly to the C-terminal domain of GyrB, which probably disrupts DNA binding by the gyrase. The chain is DNA gyrase inhibitor YacG from Acinetobacter baylyi (strain ATCC 33305 / BD413 / ADP1).